Reading from the N-terminus, the 372-residue chain is MLKSTQVILIFILLISIVESLSWLALGLAANRFDRDKPGTSCKSLKGLTRRQMRFCKKNIDLMESVRSGSLAAHAECQFQFHKRRWNCTLIDPVTHEVIPDVFLYENTRESAFVHAISSAAVAYKVTRDCARGISERCGCDYSKNDHSGKSQFQYQGCSDNVKFGIGVSKEFVDSAQRRVLMMKDDNGTSLLGPSQLSADGMHMINLHNNQAGRQVLEKSLRRECKCHGMSGSCEMRTCWDSLPNFRHIGMAIKDKFDGAAEVKVVKEDGIEKPRIVMKNSQFKRHTNADLVYMTPSPDFCESDPLRGILGTKGRQCTLAPNAIDDCSLLCCGRGYEKKVQIVEEKCNCKFIYCCEVRCEPCQKRIEKYLCL.

The first 29 residues, Met-1–Ala-29, serve as a signal peptide directing secretion. 3 cysteine pairs are disulfide-bonded: Cys-77–Cys-88, Cys-130–Cys-138, and Cys-140–Cys-158. An N-linked (GlcNAc...) asparagine glycan is attached at Asn-87. Asn-187 is a glycosylation site (N-linked (GlcNAc...) asparagine). 8 disulfides stabilise this stretch: Cys-225-Cys-239, Cys-227-Cys-234, Cys-301-Cys-332, Cys-317-Cys-327, Cys-331-Cys-371, Cys-347-Cys-362, Cys-349-Cys-359, and Cys-354-Cys-355. Residue Ser-231 is the site of O-palmitoleoyl serine; by mom-1 attachment.

It belongs to the Wnt family. Palmitoleoylation is required for efficient binding to frizzled receptors. Depalmitoleoylation leads to Wnt signaling pathway inhibition. In terms of tissue distribution, expressed in intestine, some head neurons and ventral nerve cord and pharyngeal neurons. Expressed in the tail and weakly expressed in the vulva and body wall muscles. Expressed highly in posterior dorsal and ventral muscle cells.

The protein localises to the secreted. It localises to the extracellular space. Its subcellular location is the extracellular matrix. It is found in the cytoplasm. The protein resides in the cell membrane. Ligand for members of the frizzled family of seven transmembrane receptors. Probable developmental protein. May be a signaling molecule which affects the development of discrete regions of tissues. Is likely to signal over only few cell diameters. Binds receptor tyrosine kinase cam-1. Together with Wnt ligand cwn-2, regulates the migration of CAN, ALM, BDU and HSN neurons during embryogenesis, the migration of QL and QR neuroblast descendants during larval development, and polarity of ALM neurons. Also acts with the Wnt ligand egl-20 to direct HSN neuron migration. Acts through the Wnt receptor cfz-2 to direct ALM migration. Also plays a role in axon growth and guidance in HSN and male CP neurons. In addition, together with Wnt ligand cwn-2, negatively regulates developmental neurite pruning of AIM neurons probably by acting as a ligand for receptor tyrosine kinase cam-1. Probably by activating the Wnt/Frizzled pathway, may regulate vulva development. May act redundantly with other Wnt ligands such as cwn-2 and mom-2 to control seam cell polarity. This Caenorhabditis elegans protein is Protein Wnt-1 (cwn-1).